A 474-amino-acid chain; its full sequence is Glutamate--tRNA ligase (474 aa).

Positions Pro-9–Gly-19 match the 'HIGH' region motif. The 'KMSKS' region motif lies at Lys-240–Arg-244. Lys-243 serves as a coordination point for ATP.

This sequence belongs to the class-I aminoacyl-tRNA synthetase family. Glutamate--tRNA ligase type 1 subfamily. Monomer.

It localises to the cytoplasm. It catalyses the reaction tRNA(Glu) + L-glutamate + ATP = L-glutamyl-tRNA(Glu) + AMP + diphosphate. Its function is as follows. Catalyzes the attachment of glutamate to tRNA(Glu) in a two-step reaction: glutamate is first activated by ATP to form Glu-AMP and then transferred to the acceptor end of tRNA(Glu). The protein is Glutamate--tRNA ligase of Vibrio vulnificus (strain YJ016).